The sequence spans 445 residues: Phospho-alpha-glucosidase PagL (445 aa).

Tyr-4–Asp-71 contacts NAD(+). 2 residues coordinate substrate: Arg-94 and Asn-148. Residue Cys-171 coordinates Mn(2+). The Proton donor role is filled by Asp-172. Mn(2+) is bound at residue His-201. Tyr-264 functions as the Proton acceptor in the catalytic mechanism. Arg-284 contacts substrate.

This sequence belongs to the glycosyl hydrolase 4 family. As to quaternary structure, homotetramer. It depends on NAD(+) as a cofactor. Requires Mn(2+) as cofactor.

Its function is as follows. Phospho-alpha-glucosidase that catalyzes the hydrolysis of p-nitrophenyl-alpha-D-glucopyranoside 6-phosphate, but is not able to cleave 'natural' phospho-alpha-glucosides produced via the phosphoenolpyruvate-dependent sugar phosphotransferase system (PEP-PTS). The sequence is that of Phospho-alpha-glucosidase PagL (pagL) from Clostridium acetobutylicum (strain ATCC 824 / DSM 792 / JCM 1419 / IAM 19013 / LMG 5710 / NBRC 13948 / NRRL B-527 / VKM B-1787 / 2291 / W).